We begin with the raw amino-acid sequence, 142 residues long: Protein lin-32 (142 aa).

Over residues 30–48 (PLQSPNFSLDSPNYPDSLS) the composition is skewed to polar residues. Residues 30-66 (PLQSPNFSLDSPNYPDSLSNGGGKDDKKKCRRYKTPS) are disordered. The 53-residue stretch at 72-124 (MRRSAANERERRRMNTLNVAYDELREVLPEIDSGKKLSKFETLQMAQKYIECL) folds into the bHLH domain.

As to quaternary structure, forms a heterodimer with hlh-2. Expressed in PVD motor neurons.

It is found in the nucleus. Functionally, probable transcription factor which binds the E box motif 5'-CA[TC][AG]TG-3'. Essential for the specification of the neuroblast cell fate in the development of peripheral sense organs. Its role in the generation of sensory neurons may be through positively regulating the expression of the zinc finger protein ztf-11 during postdeirid neurogenesis. Required for specification of cell fate, acting in concert with lin-32, in the development of the male-specific genital sensilla (simple sense organs) known as rays. Involved in regulating glial specification, perhaps by suppressing a glial fate in different lineages during early embryogenesis. The polypeptide is Protein lin-32 (Caenorhabditis elegans).